The following is a 633-amino-acid chain: Threonine--tRNA ligase (633 aa).

Residues 1 to 61 (MINISFPDGS…DNDCRLRILT (61 aa)) form the TGS domain. Residues 242–533 (DHRKLGKELD…LIEEYAGRFP (292 aa)) form a catalytic region. Zn(2+)-binding residues include Cys-333, His-384, and His-510.

This sequence belongs to the class-II aminoacyl-tRNA synthetase family. In terms of assembly, homodimer. The cofactor is Zn(2+).

The protein localises to the cytoplasm. The catalysed reaction is tRNA(Thr) + L-threonine + ATP = L-threonyl-tRNA(Thr) + AMP + diphosphate + H(+). Functionally, catalyzes the attachment of threonine to tRNA(Thr) in a two-step reaction: L-threonine is first activated by ATP to form Thr-AMP and then transferred to the acceptor end of tRNA(Thr). Also edits incorrectly charged L-seryl-tRNA(Thr). This is Threonine--tRNA ligase from Rickettsia bellii (strain OSU 85-389).